A 711-amino-acid polypeptide reads, in one-letter code: MND1-interacting protein 1 (711 aa).

Residues 390–648 adopt a coiled-coil conformation; the sequence is EWAQKNAMQA…LEGSYDNEAN (259 aa). 2 disordered regions span residues 552–571 and 602–622; these read EALAQMEEEQRSKEAAEGHN and RLKASSDSDSSHISNNAWKPK. Over residues 602 to 611 the composition is skewed to basic and acidic residues; sequence RLKASSDSDS. An RING-type zinc finger spans residues 653 to 697; the sequence is CIICMKDEVSVVFLPCAHQVVCGSCSDSFFASNNGGSKVTCPCCR.

As to quaternary structure, interacts (via C-terminal domain) with MND1 and HOP2. Interacts with XRI1 (via C-terminal domain).

The sequence is that of MND1-interacting protein 1 (MIP1) from Arabidopsis thaliana (Mouse-ear cress).